Reading from the N-terminus, the 72-residue chain is Translation initiation factor IF-1 1 (72 aa).

The region spanning 1–72 is the S1-like domain; the sequence is MAKEDRIEMQ…SRARIIFRAK (72 aa).

It belongs to the IF-1 family. In terms of assembly, component of the 30S ribosomal translation pre-initiation complex which assembles on the 30S ribosome in the order IF-2 and IF-3, IF-1 and N-formylmethionyl-tRNA(fMet); mRNA recruitment can occur at any time during PIC assembly.

It localises to the cytoplasm. In terms of biological role, one of the essential components for the initiation of protein synthesis. Stabilizes the binding of IF-2 and IF-3 on the 30S subunit to which N-formylmethionyl-tRNA(fMet) subsequently binds. Helps modulate mRNA selection, yielding the 30S pre-initiation complex (PIC). Upon addition of the 50S ribosomal subunit IF-1, IF-2 and IF-3 are released leaving the mature 70S translation initiation complex. This is Translation initiation factor IF-1 1 from Methylobacillus flagellatus (strain ATCC 51484 / DSM 6875 / VKM B-1610 / KT).